The following is a 403-amino-acid chain: Phosphoglycerate kinase (403 aa).

Residues 21 to 23 (DFN), Arg-36, 59 to 62 (HLGR), Arg-119, and Arg-154 each bind substrate. ATP is bound by residues Lys-207, Gly-299, Glu-330, and 357–360 (GGDA).

The protein belongs to the phosphoglycerate kinase family. As to quaternary structure, monomer.

It is found in the cytoplasm. It catalyses the reaction (2R)-3-phosphoglycerate + ATP = (2R)-3-phospho-glyceroyl phosphate + ADP. The protein operates within carbohydrate degradation; glycolysis; pyruvate from D-glyceraldehyde 3-phosphate: step 2/5. This chain is Phosphoglycerate kinase, found in Chlamydia trachomatis serovar L2 (strain ATCC VR-902B / DSM 19102 / 434/Bu).